The primary structure comprises 148 residues: Deoxyuridine 5'-triphosphate nucleotidohydrolase (148 aa).

Residues 67–69 (RSG), asparagine 80, 84–86 (LID), and methionine 94 each bind substrate.

The protein belongs to the dUTPase family. Mg(2+) serves as cofactor.

The catalysed reaction is dUTP + H2O = dUMP + diphosphate + H(+). It participates in pyrimidine metabolism; dUMP biosynthesis; dUMP from dCTP (dUTP route): step 2/2. Its function is as follows. This enzyme is involved in nucleotide metabolism: it produces dUMP, the immediate precursor of thymidine nucleotides and it decreases the intracellular concentration of dUTP so that uracil cannot be incorporated into DNA. This Francisella tularensis subsp. holarctica (strain FTNF002-00 / FTA) protein is Deoxyuridine 5'-triphosphate nucleotidohydrolase.